The sequence spans 265 residues: Neutrophil elastase (265 aa).

The first 26 residues, 1–26 (MALGRLSSRTLAAMLLALFLGGPALA), serve as a signal peptide directing secretion. Residues 29-247 (IVGGRPARPH…FADWINSIIR (219 aa)) form the Peptidase S1 domain. The cysteines at positions 54 and 70 are disulfide-linked. Residues H69 and D116 each act as charge relay system in the active site. Residues N123 and N172 are each glycosylated (N-linked (GlcNAc...) asparagine). Cystine bridges form between C150–C208, C180–C187, and C198–C223. The active-site Charge relay system is the S202.

It belongs to the peptidase S1 family. Elastase subfamily. As to quaternary structure, interacts with NOTCH2NL.

The enzyme catalyses Hydrolysis of proteins, including elastin. Preferential cleavage: Val-|-Xaa &gt; Ala-|-Xaa.. Functionally, serine protease that modifies the functions of natural killer cells, monocytes and granulocytes. Inhibits C5a-dependent neutrophil enzyme release and chemotaxis. Promotes blood coagulation. Through the activation of the platelet fibrinogen receptor integrin alpha-IIb/beta-3, potentiates platelet aggregation induced by a threshold concentration of cathepsin G (CTSG). Cleaves and thus inactivates tissue factor pathway inhibitor (TFPI). Capable of killing E.coli; probably digests outer membrane protein A (ompA) in E.coli. The sequence is that of Neutrophil elastase (Elane) from Mus musculus (Mouse).